Here is a 1357-residue protein sequence, read N- to C-terminus: Protein CFT1 (1357 aa).

The segment at Thr445–Asp465 is disordered. Residues Asn450–Met459 are compositionally biased toward polar residues.

The protein belongs to the CFT1 family. In terms of assembly, component of the cleavage and polyadenylation factor (CPF) complex, which is composed of at least PTI1, SYC1, SSU72, GLC7, MPE1, REF2, PFS2, PTA1, YSH1/BRR5, SWD2, CFT2/YDH1, YTH1, CFT1/YHH1, FIP1 and PAP1. Interacts with the phosphorylated CTD domain of RPB1/RNA polymerase II.

The protein resides in the nucleus. In terms of biological role, RNA-binding component of the cleavage and polyadenylation factor (CPF) complex, which plays a key role in polyadenylation-dependent pre-mRNA 3'-end formation and cooperates with cleavage factors including the CFIA complex and NAB4/CFIB. Involved in poly(A) site recognition. May be involved in coupling transcription termination and mRNA 3'-end formation. This is Protein CFT1 (CFT1) from Saccharomyces cerevisiae (strain ATCC 204508 / S288c) (Baker's yeast).